The primary structure comprises 379 residues: tRNA 2-selenouridine synthase (379 aa).

The region spanning 15–138 (FQQNIPLMDV…ARNYLIKQIE (124 aa)) is the Rhodanese domain. The active-site S-selanylcysteine intermediate is the Cys98.

The protein belongs to the SelU family. As to quaternary structure, monomer.

It carries out the reaction 5-methylaminomethyl-2-thiouridine(34) in tRNA + selenophosphate + (2E)-geranyl diphosphate + H2O + H(+) = 5-methylaminomethyl-2-selenouridine(34) in tRNA + (2E)-thiogeraniol + phosphate + diphosphate. The catalysed reaction is 5-methylaminomethyl-2-thiouridine(34) in tRNA + (2E)-geranyl diphosphate = 5-methylaminomethyl-S-(2E)-geranyl-thiouridine(34) in tRNA + diphosphate. The enzyme catalyses 5-methylaminomethyl-S-(2E)-geranyl-thiouridine(34) in tRNA + selenophosphate + H(+) = 5-methylaminomethyl-2-(Se-phospho)selenouridine(34) in tRNA + (2E)-thiogeraniol. It catalyses the reaction 5-methylaminomethyl-2-(Se-phospho)selenouridine(34) in tRNA + H2O = 5-methylaminomethyl-2-selenouridine(34) in tRNA + phosphate. In terms of biological role, involved in the post-transcriptional modification of the uridine at the wobble position (U34) of tRNA(Lys), tRNA(Glu) and tRNA(Gln). Catalyzes the conversion of 2-thiouridine (S2U-RNA) to 2-selenouridine (Se2U-RNA). Acts in a two-step process involving geranylation of 2-thiouridine (S2U) to S-geranyl-2-thiouridine (geS2U) and subsequent selenation of the latter derivative to 2-selenouridine (Se2U) in the tRNA chain. The sequence is that of tRNA 2-selenouridine synthase from Bdellovibrio bacteriovorus (strain ATCC 15356 / DSM 50701 / NCIMB 9529 / HD100).